A 388-amino-acid polypeptide reads, in one-letter code: Diacylglycerol O-acyltransferase 2 (388 aa).

Over 1–69 the chain is Cytoplasmic; it reads MKTLIAAYSG…NRSKVEKQLQ (69 aa). The chain crosses the membrane as a helical span at residues 70–88; that stretch reads VISVLQWVLSFLVLGVACS. At 89-92 the chain is on the lumenal side; sequence VILM. The chain crosses the membrane as a helical span at residues 93-112; the sequence is YTFCTDCWLIAVLYFTWLAF. The Cytoplasmic portion of the chain corresponds to 113-388; the sequence is DWNTPKKGGR…LPETEVLEVN (276 aa).

It belongs to the diacylglycerol acyltransferase family. As to quaternary structure, forms multimeric complexes consisting of several DGAT2 subunits. Interacts with SLC27A1 and this interaction is enhanced in the presence of ZFYVE1. As to expression, predominantly expressed in liver. Also expressed in testis.

The protein localises to the endoplasmic reticulum membrane. It is found in the lipid droplet. Its subcellular location is the cytoplasm. The protein resides in the perinuclear region. It carries out the reaction an acyl-CoA + a 1,2-diacyl-sn-glycerol = a triacyl-sn-glycerol + CoA. It catalyses the reaction all-trans-retinol + an acyl-CoA = an all-trans-retinyl ester + CoA. The enzyme catalyses 1,2-di-(9Z-octadecenoyl)-sn-glycerol + hexadecanoyl-CoA = 1,2-di-(9Z)-octadecenoyl-3-hexadecanoyl-sn-glycerol + CoA. The catalysed reaction is 1,2-di-(9Z-octadecenoyl)-sn-glycerol + (9Z)-octadecenoyl-CoA = 1,2,3-tri-(9Z-octadecenoyl)-glycerol + CoA. It carries out the reaction 1,3-di-(9Z-octadecenoyl)-glycerol + (9Z)-octadecenoyl-CoA = 1,2,3-tri-(9Z-octadecenoyl)-glycerol + CoA. It catalyses the reaction 2,3-di-(9Z)-octadecenoyl-sn-glycerol + (9Z)-octadecenoyl-CoA = 1,2,3-tri-(9Z-octadecenoyl)-glycerol + CoA. The enzyme catalyses 2-(9Z-octadecenoyl)-glycerol + hexadecanoyl-CoA = 1-hexadecanoyl-2-(9Z-octadecenoyl)-sn-glycerol + CoA. The catalysed reaction is 2-(9Z-octadecenoyl)-glycerol + (9Z)-octadecenoyl-CoA = 1,2-di-(9Z-octadecenoyl)-sn-glycerol + CoA. It carries out the reaction all-trans-retinol + hexadecanoyl-CoA = all-trans-retinyl hexadecanoate + CoA. It catalyses the reaction 1-O-(9Z-octadecenyl)-glycerol + (9Z)-octadecenoyl-CoA = 1-O-(9Z-octadecyl)-3-(9Z-octadecenoyl)-glycerol + CoA. The enzyme catalyses 1-(9Z-octadecenoyl)-glycerol + (9Z)-octadecenoyl-CoA = 1,2-di-(9Z-octadecenoyl)-glycerol + CoA. It functions in the pathway glycerolipid metabolism; triacylglycerol biosynthesis. Inhibited by niacin. Its function is as follows. Essential acyltransferase that catalyzes the terminal and only committed step in triacylglycerol synthesis by using diacylglycerol and fatty acyl CoA as substrates. Required for synthesis and storage of intracellular triglycerides. Probably plays a central role in cytosolic lipid accumulation. In liver, is primarily responsible for incorporating endogenously synthesized fatty acids into triglycerides. Also functions as an acyl-CoA retinol acyltransferase (ARAT). Also able to use 1-monoalkylglycerol (1-MAkG) as an acyl acceptor for the synthesis of monoalkyl-monoacylglycerol (MAMAG). The protein is Diacylglycerol O-acyltransferase 2 of Mus musculus (Mouse).